The primary structure comprises 494 residues: UPF0371 protein SUB1165 (494 aa).

This sequence belongs to the UPF0371 family.

The protein is UPF0371 protein SUB1165 of Streptococcus uberis (strain ATCC BAA-854 / 0140J).